The following is a 212-amino-acid chain: Methylthioribulose-1-phosphate dehydratase (212 aa).

Positions 99 and 101 each coordinate Zn(2+).

This sequence belongs to the aldolase class II family. MtnB subfamily. As to quaternary structure, homotetramer. Zn(2+) is required as a cofactor.

It carries out the reaction 5-(methylsulfanyl)-D-ribulose 1-phosphate = 5-methylsulfanyl-2,3-dioxopentyl phosphate + H2O. It participates in amino-acid biosynthesis; L-methionine biosynthesis via salvage pathway; L-methionine from S-methyl-5-thio-alpha-D-ribose 1-phosphate: step 2/6. Its function is as follows. Catalyzes the dehydration of methylthioribulose-1-phosphate (MTRu-1-P) into 2,3-diketo-5-methylthiopentyl-1-phosphate (DK-MTP-1-P). The sequence is that of Methylthioribulose-1-phosphate dehydratase from Bacillus pumilus (strain SAFR-032).